Here is a 170-residue protein sequence, read N- to C-terminus: Small ribosomal subunit protein uS5 (170 aa).

In terms of domain architecture, S5 DRBM spans 13–76 (LTEKLIGVNR…DQARRSMVKI (64 aa)).

It belongs to the universal ribosomal protein uS5 family. In terms of assembly, part of the 30S ribosomal subunit. Contacts proteins S4 and S8.

Its function is as follows. With S4 and S12 plays an important role in translational accuracy. Functionally, located at the back of the 30S subunit body where it stabilizes the conformation of the head with respect to the body. In Laribacter hongkongensis (strain HLHK9), this protein is Small ribosomal subunit protein uS5.